The following is a 101-amino-acid chain: Small ribosomal subunit protein uS14 (101 aa).

This sequence belongs to the universal ribosomal protein uS14 family. As to quaternary structure, part of the 30S ribosomal subunit. Contacts proteins S3 and S10.

Functionally, binds 16S rRNA, required for the assembly of 30S particles and may also be responsible for determining the conformation of the 16S rRNA at the A site. The sequence is that of Small ribosomal subunit protein uS14 from Brucella abortus (strain S19).